A 308-amino-acid polypeptide reads, in one-letter code: Autophagy-related protein 3 (308 aa).

The flexible region stretch occupies residues 83-159; sequence NFVETQTTET…NELADDDDDI (77 aa). Residues 89 to 121 form a disordered region; the sequence is TTETRDVGDGWELEGQSEGERESGREDTKSNEE. Over residues 106 to 120 the composition is skewed to basic and acidic residues; that stretch reads EGERESGREDTKSNE. Cysteine 235 acts as the Glycyl thioester intermediate in catalysis. The handle region stretch occupies residues 239-283; it reads NVMKVLMEKVRASRHRARDTEAQKNAEEDWEDLQSDIDDGLRVDQ.

The protein belongs to the ATG3 family. Monomer. Interacts with ATG8 through an intermediate thioester bond between Cys-235 and the C-terminal Gly of ATG8. Interacts with the C-terminal region of the E1-like ATG7 enzyme. Also interacts with the ATG12-ATG5 conjugate.

It is found in the cytoplasm. Its function is as follows. E2 conjugating enzyme required for the cytoplasm to vacuole transport (Cvt) and autophagy. Required for selective autophagic degradation of the nucleus (nucleophagy) as well as for mitophagy which contributes to regulate mitochondrial quantity and quality by eliminating the mitochondria to a basal level to fulfill cellular energy requirements and preventing excess ROS production. Responsible for the E2-like covalent binding of phosphatidylethanolamine to the C-terminal Gly of ATG8. The ATG12-ATG5 conjugate plays a role of an E3 and promotes the transfer of ATG8 from ATG3 to phosphatidylethanolamine (PE). This step is required for the membrane association of ATG8. The formation of the ATG8-phosphatidylethanolamine conjugate is essential for autophagy and for the cytoplasm to vacuole transport (Cvt). The ATG8-PE conjugate mediates tethering between adjacent membranes and stimulates membrane hemifusion, leading to expansion of the autophagosomal membrane during autophagy. In Kluyveromyces marxianus (strain DMKU3-1042 / BCC 29191 / NBRC 104275) (Yeast), this protein is Autophagy-related protein 3.